We begin with the raw amino-acid sequence, 657 residues long: Translation factor GUF1, mitochondrial (657 aa).

The transit peptide at 1–39 (MRGCLQSVKWLTSALRPSQSLASSTRYPRRLLSTSAPRN) directs the protein to the mitochondrion. One can recognise a tr-type G domain in the interval 59 to 239 (ERFRNFCIVA…TVIEQIPAPV (181 aa)). GTP contacts are provided by residues 121–128 (HQGEDYLL), 185–189 (INKVD), and 239–242 (VGDR).

This sequence belongs to the TRAFAC class translation factor GTPase superfamily. Classic translation factor GTPase family. LepA subfamily.

The protein resides in the mitochondrion inner membrane. The catalysed reaction is GTP + H2O = GDP + phosphate + H(+). Functionally, promotes mitochondrial protein synthesis. May act as a fidelity factor of the translation reaction, by catalyzing a one-codon backward translocation of tRNAs on improperly translocated ribosomes. Binds to mitochondrial ribosomes in a GTP-dependent manner. The chain is Translation factor GUF1, mitochondrial from Ajellomyces capsulatus (strain H143) (Darling's disease fungus).